Reading from the N-terminus, the 243-residue chain is 1-(5-phosphoribosyl)-5-[(5-phosphoribosylamino)methylideneamino] imidazole-4-carboxamide isomerase (243 aa).

Asp-9 functions as the Proton acceptor in the catalytic mechanism. The Proton donor role is filled by Asp-131.

Belongs to the HisA/HisF family.

The protein localises to the cytoplasm. It carries out the reaction 1-(5-phospho-beta-D-ribosyl)-5-[(5-phospho-beta-D-ribosylamino)methylideneamino]imidazole-4-carboxamide = 5-[(5-phospho-1-deoxy-D-ribulos-1-ylimino)methylamino]-1-(5-phospho-beta-D-ribosyl)imidazole-4-carboxamide. It participates in amino-acid biosynthesis; L-histidine biosynthesis; L-histidine from 5-phospho-alpha-D-ribose 1-diphosphate: step 4/9. The sequence is that of 1-(5-phosphoribosyl)-5-[(5-phosphoribosylamino)methylideneamino] imidazole-4-carboxamide isomerase from Campylobacter jejuni (strain RM1221).